Consider the following 976-residue polypeptide: MGVPAFFRWLTKKYPATVVNANEDRQRGVDGRRVPVDCTQPNPNFQEFDNLYLDMNGIIHPCTHPEDRPAPKNEDEMFALIFEYIDRIFSIVRPRRLLYMAIDGVAPRAKMNQQRSRRFRASKEMAEKAASIEEQRRRLIAEGIAVPQKKKDEEEAHFDSNCITPGTPFMARLADALRYYIHDRVTNDPAWANIEIILSDANVPGEGEHKIMDYIRKQRGNPAHDPNTVHCLCGADADLIMLGIATHEANFNIIREEFVPNQPRACELCGQYGHELKECRGAENDTDLGDEYCKPEQREKNFIFLRIPVLREYLEKEMAMPNLPFQFNLERALDDWVFLCFFVGNDFLPHLPSLEIREGAIDRLIKLYKEMVYEMKGYLTKDGIPELDRVEMIMRGLGKVEDEIFKRRQQDEERFKENQKNKKARMQQYGRGRGGRGRGRGQPAYVPSHGILAPMSAPMHHSGESTRQMASDARQAAMQFNATNDANAQAAANLKALLNVKGEQSPAEVAAQESRKRKAEQPIIITDEDEEPKDDIRLYESGWKERYYRAKFDVGSDDVDFRHRVAWAYVEGLCWVLRYYYQGCSSWDWYFPYHYAPFASDFETVGEFKPDFTRPTKPFNPLEQLMSVFPAASKQHLPVEWQKLMTEDESPIIDLYPADFRIDLNGKKYAWQGVALLPFVDEQRLLETLKSVYPTLTDEEKYRNTRGPNRIFIGRNHKSFAFFQQVAESKSNDLVDLDPSLLNGVSGKISYDSTATAPGLPFPSPVSHEECQDLPTNCGICVLYEDPEYPANYVFPAVRLDGAKEAEKTLRPEDWNERRDGRFNPTIGFNRNAPRGGLDLSGQRHINHHVRGAMYDRQGGNDNYRGGYRGGYQGGYDDRRGGRGGGGYRGGYNDSRPDFGRNYAGREGGGPQHYHEHQPGGGHGRPHDQQPYQDNRRGGGYHRGGRGNGPTGYQRPPYRGGRGRGGGGYQGNSSWR.

A CCHC-type zinc finger spans residues 264–281 (RACELCGQYGHELKECRG). Basic and acidic residues predominate over residues 411 to 420 (DEERFKENQK). A disordered region spans residues 411–442 (DEERFKENQKNKKARMQQYGRGRGGRGRGRGQ). The tract at residues 535–788 (DIRLYESGWK…GICVLYEDPE (254 aa)) is interaction with paxt-1. The segment at 815–976 (WNERRDGRFN…GGYQGNSSWR (162 aa)) is disordered. Low complexity predominate over residues 856 to 866 (DRQGGNDNYRG).

This sequence belongs to the 5'-3' exonuclease family. XRN2/RAT1 subfamily. As to quaternary structure, interacts with paxt-1 (via N-terminus); the interaction is direct and results in stabilization of xrn-2 in the complex.

It is found in the nucleus. Possesses 5'-&gt;3' exoribonuclease activity. Plays a role in maintenance of steady-state concentration and turnover of microRNAs (miRNA) by degradation of mature miRNA. Degradation role is enhanced when in complex with paxt-1. Partially redundant to xrn-1 in miRNA guide strand degradation. Implicated in differential regulation of mRNAs such as let-7 by controlling the accumulation of mature miRNA. Positively regulates molting of the pharyngeal cuticle. The sequence is that of 5'-3' exoribonuclease 2 homolog from Caenorhabditis briggsae.